Here is a 614-residue protein sequence, read N- to C-terminus: UDP-sugar pyrophosphorylase (614 aa).

Ala-2 is modified (N-acetylalanine).

Belongs to the USP family. It depends on Mg(2+) as a cofactor. Mn(2+) is required as a cofactor. As to expression, ubiquitous, but most abundant in rosette leaves, inflorescences, stems, stamens and pollen.

It carries out the reaction a monosaccharide 1-phosphate + UTP + H(+) = a UDP-monosaccharide + diphosphate. Its function is as follows. Required for the synthesis of the intine, the pectocellulosic inner wall of developing pollen. May function as the terminal enzyme of the myo-inositol oxidation (MIO) pathway. May also play a role in the salvage pathway for synthesis of nucleotide sugars. Can use a wide range of substrates including glucose-1-phosphate, galactose-1-phosphate, xylose-1-phosphate, arabinose-1-phosphate and glucuronate-1-phosphate. The sequence is that of UDP-sugar pyrophosphorylase (USP) from Arabidopsis thaliana (Mouse-ear cress).